The primary structure comprises 431 residues: MRIVPFGAAREVTGSAHLLLAGGRRVLLDCGMFQGKEEARNHAPFGFDPKEVDAVLLTHAHLDHVGRLPKLFREGYRGPVYATRATVLLMEIVLEDALKVMDEPFFGPEDVEEALGHLRPLEYGEWLRLGALSLAFGQAGHLPGSAFVVAQGEGRTLVYSGDLGNREKDVLPDPSLPPLADLVLAEGTYGDRPHRPYRETVREFLEILEKTLSQGGKVLIPTFAVERAQEILYVLYTHGHRLPRAPIYLDSPMAGRVLSLYPRLVRYFSEEVQAHFLQGKNPFRPAGLEVVEHTEASKALNRAPGPMVVLAGSGMLAGGRILHHLKHGLSDPRNALVFVGYQPQGGLGAEIIARPPAVRILGEEVPLRASVHTLGGFSGHAGQDELLDWLQGEPRVVLVHGEEEKLLALGKLLALRGQEVSLARFGEGVPV.

Residues His59, His61, Asp63, His64, His141, Asp162, and His400 each coordinate Zn(2+).

The protein belongs to the metallo-beta-lactamase superfamily. RNA-metabolizing metallo-beta-lactamase-like family. In terms of assembly, monomer. It depends on Zn(2+) as a cofactor.

The protein localises to the cytoplasm. Inhibited by cadmium, cobalt, manganese, magnesium, calcium and nickel ions. Its function is as follows. Has endoribonuclease activity towards 23S and 16S rRNA (in vitro). The chain is Ribonuclease TTHA0252 from Thermus thermophilus (strain ATCC 27634 / DSM 579 / HB8).